Consider the following 464-residue polypeptide: Soluble pyridine nucleotide transhydrogenase (464 aa).

35-44 (DSRRQVGGNC) is a binding site for FAD.

Belongs to the class-I pyridine nucleotide-disulfide oxidoreductase family. Requires FAD as cofactor.

It is found in the cytoplasm. The catalysed reaction is NAD(+) + NADPH = NADH + NADP(+). Its function is as follows. Conversion of NADPH, generated by peripheral catabolic pathways, to NADH, which can enter the respiratory chain for energy generation. The polypeptide is Soluble pyridine nucleotide transhydrogenase (Pseudomonas savastanoi pv. phaseolicola (strain 1448A / Race 6) (Pseudomonas syringae pv. phaseolicola (strain 1448A / Race 6))).